The following is a 139-amino-acid chain: MLSPKRTKYRKHHRGRMKGKATRGNKIVFGDFALQALEPAWITSRQIEAGRRAMTRYARRGGKLWIRIFPDKPVTMRPAESRMGSGKGSPEYWVAVVKPGKILYEMKGVSEIIARAAMRIASYKMPIKTNFLVKSTSPN.

Residues 1 to 20 (MLSPKRTKYRKHHRGRMKGK) are disordered.

It belongs to the universal ribosomal protein uL16 family. Part of the 50S ribosomal subunit.

The protein resides in the plastid. The protein localises to the chloroplast. The polypeptide is Large ribosomal subunit protein uL16c (Pleurastrum terricola (Filamentous green alga)).